We begin with the raw amino-acid sequence, 494 residues long: Metalloprotease TIKI1 (494 aa).

Residues 1 to 25 (MTMMTMMMVSWSAFLQICWILMVRA) form the signal peptide. The Extracellular portion of the chain corresponds to 26–467 (NQFNPGEPSG…QEHERANHDR (442 aa)). Residues asparagine 234 and asparagine 282 are each glycosylated (N-linked (GlcNAc...) asparagine). The chain crosses the membrane as a helical span at residues 468-488 (TFSGSSSRTGPALSALAVCVQ). Over 489-494 (MLRLLL) the chain is Cytoplasmic.

This sequence belongs to the TIKI family. The cofactor is Mn(2+). It depends on Co(2+) as a cofactor.

The protein localises to the cell membrane. Its function is as follows. Metalloprotease that acts as a negative regulator of the Wnt signaling pathway by mediating the cleavage of the N-terminal residues of a subset of Wnt proteins. Following cleavage, Wnt proteins become oxidized and form large disulfide-bond oligomers, leading to their inactivation. The protein is Metalloprotease TIKI1 (trabd2a) of Danio rerio (Zebrafish).